We begin with the raw amino-acid sequence, 298 residues long: Glycine--tRNA ligase alpha subunit (298 aa).

It belongs to the class-II aminoacyl-tRNA synthetase family. Tetramer of two alpha and two beta subunits.

The protein localises to the cytoplasm. It carries out the reaction tRNA(Gly) + glycine + ATP = glycyl-tRNA(Gly) + AMP + diphosphate. The polypeptide is Glycine--tRNA ligase alpha subunit (Lacticaseibacillus paracasei (strain ATCC 334 / BCRC 17002 / CCUG 31169 / CIP 107868 / KCTC 3260 / NRRL B-441) (Lactobacillus paracasei)).